A 98-amino-acid polypeptide reads, in one-letter code: NADH-ubiquinone oxidoreductase chain 4L (98 aa).

3 helical membrane-spanning segments follow: residues 2–22 (PSISINIILAFAAALLGMLMF), 28–48 (SSLLCLEGMMLSMFILSTLII), and 61–81 (IMLLVFSACEAAIGLALLVMV).

Belongs to the complex I subunit 4L family. As to quaternary structure, core subunit of respiratory chain NADH dehydrogenase (Complex I) which is composed of 45 different subunits.

Its subcellular location is the mitochondrion inner membrane. The catalysed reaction is a ubiquinone + NADH + 5 H(+)(in) = a ubiquinol + NAD(+) + 4 H(+)(out). Core subunit of the mitochondrial membrane respiratory chain NADH dehydrogenase (Complex I) which catalyzes electron transfer from NADH through the respiratory chain, using ubiquinone as an electron acceptor. Part of the enzyme membrane arm which is embedded in the lipid bilayer and involved in proton translocation. The chain is NADH-ubiquinone oxidoreductase chain 4L (MT-ND4L) from Allocebus trichotis (Hairy-eared dwarf lemur).